The sequence spans 267 residues: Probable aquaporin TIP3-2 (267 aa).

N-acetylmethionine is present on Met-1. Ala-2 carries the N-acetylalanine; in Probable aquaporin TIP3-2, N-terminally processed modification. Over 2–26 (ATSARRAYGFGRADEATHPDSIRAT) the chain is Cytoplasmic. The chain crosses the membrane as a helical span at residues 27–47 (LAEFLSTFVFVFAGEGSILAL). Over 48-66 (DKLYWDTAAHTGTNTPGGL) the chain is Vacuolar. The chain crosses the membrane as a helical span at residues 67-87 (VLVALAHALALFAAVSAAINV). Residues 88–110 (SGGHVNPAVTFAALIGGRISVIR) are Cytoplasmic-facing. The NPA 1 signature appears at 93–95 (NPA). Residues 111 to 131 (AIYYWVAQLIGAILACLLLRL) traverse the membrane as a helical segment. Residues 132-151 (ATNGLRPVGFHVASGVSELH) are Vacuolar-facing. A helical transmembrane segment spans residues 152-172 (GLLMEIILTFALVYVVYSTAI). Residues 173-178 (DPKRGS) lie on the Cytoplasmic side of the membrane. A helical transmembrane segment spans residues 179-199 (IGIIAPLAIGLIVGANILVGG). Over 200–226 (PFDGASMNPARAFGPALVGWRWSNHWI) the chain is Vacuolar. Residues 207-209 (NPA) carry the NPA 2 motif. A helical transmembrane segment spans residues 227 to 247 (YWVGPFIGGALAALIYEYMII). At 248 to 267 (PSVNEPPHHSTHQPLAPEDY) the chain is on the cytoplasmic side.

Belongs to the MIP/aquaporin (TC 1.A.8) family. TIP (TC 1.A.8.10) subfamily. As to expression, predominantly expressed in developing seeds. Also expressed in rosette leaves.

The protein localises to the vacuole membrane. Its function is as follows. Aquaporins facilitate the transport of water and small neutral solutes across cell membranes. The polypeptide is Probable aquaporin TIP3-2 (TIP3-2) (Arabidopsis thaliana (Mouse-ear cress)).